Consider the following 116-residue polypeptide: Large ribosomal subunit protein bL17 (116 aa).

Belongs to the bacterial ribosomal protein bL17 family. Part of the 50S ribosomal subunit. Contacts protein L32.

This chain is Large ribosomal subunit protein bL17, found in Prochlorococcus marinus (strain MIT 9301).